A 433-amino-acid chain; its full sequence is Glutamyl-tRNA reductase (433 aa).

Substrate is bound by residues 49–52 (TCNR), serine 109, 114–116 (EGQ), and glutamine 120. Cysteine 50 functions as the Nucleophile in the catalytic mechanism. 198 to 203 (GAGRMS) contributes to the NADP(+) binding site.

This sequence belongs to the glutamyl-tRNA reductase family. As to quaternary structure, homodimer.

The enzyme catalyses (S)-4-amino-5-oxopentanoate + tRNA(Glu) + NADP(+) = L-glutamyl-tRNA(Glu) + NADPH + H(+). It participates in porphyrin-containing compound metabolism; protoporphyrin-IX biosynthesis; 5-aminolevulinate from L-glutamyl-tRNA(Glu): step 1/2. It functions in the pathway porphyrin-containing compound metabolism; chlorophyll biosynthesis. Functionally, catalyzes the NADPH-dependent reduction of glutamyl-tRNA(Glu) to glutamate 1-semialdehyde (GSA). In Prochlorococcus marinus subsp. pastoris (strain CCMP1986 / NIES-2087 / MED4), this protein is Glutamyl-tRNA reductase.